The sequence spans 276 residues: Putative pyruvate, phosphate dikinase regulatory protein (276 aa).

151–158 (GISRTSKT) lines the ADP pocket.

Belongs to the pyruvate, phosphate/water dikinase regulatory protein family. PDRP subfamily.

The enzyme catalyses N(tele)-phospho-L-histidyl/L-threonyl-[pyruvate, phosphate dikinase] + ADP = N(tele)-phospho-L-histidyl/O-phospho-L-threonyl-[pyruvate, phosphate dikinase] + AMP + H(+). It catalyses the reaction N(tele)-phospho-L-histidyl/O-phospho-L-threonyl-[pyruvate, phosphate dikinase] + phosphate + H(+) = N(tele)-phospho-L-histidyl/L-threonyl-[pyruvate, phosphate dikinase] + diphosphate. Bifunctional serine/threonine kinase and phosphorylase involved in the regulation of the pyruvate, phosphate dikinase (PPDK) by catalyzing its phosphorylation/dephosphorylation. The chain is Putative pyruvate, phosphate dikinase regulatory protein from Streptococcus agalactiae serotype Ia (strain ATCC 27591 / A909 / CDC SS700).